We begin with the raw amino-acid sequence, 390 residues long: S-adenosylmethionine synthase (390 aa).

His-15 provides a ligand contact to ATP. A Mg(2+)-binding site is contributed by Asp-17. Glu-43 is a binding site for K(+). 2 residues coordinate L-methionine: Glu-56 and Gln-99. The interval 99 to 109 (QSPDINQGVDR) is flexible loop. ATP-binding positions include 164 to 166 (DAK), 230 to 231 (RF), Asp-239, 245 to 246 (RK), Ala-262, and Lys-266. Asp-239 is a binding site for L-methionine. Lys-270 is a binding site for L-methionine.

This sequence belongs to the AdoMet synthase family. In terms of assembly, homotetramer; dimer of dimers. Mg(2+) is required as a cofactor. Requires K(+) as cofactor.

The protein localises to the cytoplasm. The catalysed reaction is L-methionine + ATP + H2O = S-adenosyl-L-methionine + phosphate + diphosphate. Its pathway is amino-acid biosynthesis; S-adenosyl-L-methionine biosynthesis; S-adenosyl-L-methionine from L-methionine: step 1/1. In terms of biological role, catalyzes the formation of S-adenosylmethionine (AdoMet) from methionine and ATP. The overall synthetic reaction is composed of two sequential steps, AdoMet formation and the subsequent tripolyphosphate hydrolysis which occurs prior to release of AdoMet from the enzyme. The chain is S-adenosylmethionine synthase from Photorhabdus laumondii subsp. laumondii (strain DSM 15139 / CIP 105565 / TT01) (Photorhabdus luminescens subsp. laumondii).